The chain runs to 136 residues: Large ribosomal subunit protein bL21 (136 aa).

Positions 1–21 are enriched in low complexity; that stretch reads MSETPSKAKASKPAESKAQAS. The segment at 1 to 25 is disordered; the sequence is MSETPSKAKASKPAESKAQASDSSG.

The protein belongs to the bacterial ribosomal protein bL21 family. As to quaternary structure, part of the 50S ribosomal subunit. Contacts protein L20.

Its function is as follows. This protein binds to 23S rRNA in the presence of protein L20. This chain is Large ribosomal subunit protein bL21, found in Synechococcus sp. (strain RCC307).